The sequence spans 65 residues: Neurotoxin Bot2 (65 aa).

In terms of domain architecture, LCN-type CS-alpha/beta spans 2–64 (RDAYIAQPEN…VPIRIEGKCH (63 aa)). Disulfide bonds link Cys12/Cys63, Cys16/Cys36, Cys22/Cys46, and Cys26/Cys48. Position 65 is a phenylalanine amide (Phe65).

This sequence belongs to the long (4 C-C) scorpion toxin superfamily. Sodium channel inhibitor family. Alpha subfamily. In terms of tissue distribution, expressed by the venom gland.

The protein localises to the secreted. Its function is as follows. Binds to sodium channels (Nav) and inhibits the inactivation of the activated channels, thereby blocking neuronal transmission. The sequence is that of Neurotoxin Bot2 from Buthus occitanus tunetanus (Common European scorpion).